The chain runs to 1376 residues: DNA-directed RNA polymerase subunit beta (1376 aa).

Polar residues predominate over residues 1357–1368 (NSKTGRQTNPGT). Positions 1357 to 1376 (NSKTGRQTNPGTRENLPAAE) are disordered.

Belongs to the RNA polymerase beta chain family. The RNAP catalytic core consists of 2 alpha, 1 beta, 1 beta' and 1 omega subunit. When a sigma factor is associated with the core the holoenzyme is formed, which can initiate transcription.

It catalyses the reaction RNA(n) + a ribonucleoside 5'-triphosphate = RNA(n+1) + diphosphate. DNA-dependent RNA polymerase catalyzes the transcription of DNA into RNA using the four ribonucleoside triphosphates as substrates. This chain is DNA-directed RNA polymerase subunit beta, found in Azorhizobium caulinodans (strain ATCC 43989 / DSM 5975 / JCM 20966 / LMG 6465 / NBRC 14845 / NCIMB 13405 / ORS 571).